Consider the following 310-residue polypeptide: p-hydroxybenzoic acid efflux pump subunit AaeA (310 aa).

Residues 12 to 32 (VITLLLVIIAIVLIFRIWVFY) traverse the membrane as a helical segment.

The protein belongs to the membrane fusion protein (MFP) (TC 8.A.1) family.

The protein localises to the cell inner membrane. Forms an efflux pump with AaeB. This Erwinia tasmaniensis (strain DSM 17950 / CFBP 7177 / CIP 109463 / NCPPB 4357 / Et1/99) protein is p-hydroxybenzoic acid efflux pump subunit AaeA.